A 568-amino-acid polypeptide reads, in one-letter code: Protein adenylyltransferase SelO, mitochondrial (568 aa).

ATP-binding residues include G120, G122, R123, K144, D156, G157, R208, and R215. The active-site Proton acceptor is D287. 2 residues coordinate Mg(2+): N288 and D297. Residue D297 participates in ATP binding.

Belongs to the SELO family. Mg(2+) is required as a cofactor. In terms of processing, forms probably one or more intrachain disulfide bridges.

Its subcellular location is the mitochondrion. The enzyme catalyses L-tyrosyl-[protein] + ATP = O-(5'-adenylyl)-L-tyrosyl-[protein] + diphosphate. Catalyzes the transfer of adenosine 5'-monophosphate (AMP) to Tyr residues of target mitochondrial proteins (AMPylation). Involved in redox homeostasis by regulating the cellular response to oxidative stress. Regulates protein S-glutathionylation levels possibly by AMPylation of deglutathionylation enzymes such as glutaredoxins. This chain is Protein adenylyltransferase SelO, mitochondrial, found in Schizosaccharomyces pombe (strain 972 / ATCC 24843) (Fission yeast).